A 419-amino-acid polypeptide reads, in one-letter code: Ras association domain-containing protein 8 (419 aa).

The region spanning 1-82 (MELKVWVDGV…VQLILRRTGP (82 aa)) is the Ras-associating domain. Residues Ser-105 and Ser-129 each carry the phosphoserine modification. Residue Thr-131 is modified to Phosphothreonine. A disordered region spans residues 372–399 (ASQADIETEAPFQSGSLKRPGSSRQLPS). Residues 382 to 399 (PFQSGSLKRPGSSRQLPS) are compositionally biased toward polar residues. Ser-387 bears the Phosphoserine mark.

This Mus musculus (Mouse) protein is Ras association domain-containing protein 8 (Rassf8).